The primary structure comprises 517 residues: Ribonuclease Y (517 aa).

The helical transmembrane segment at 3–23 (AILYVIVAVIALILGGAAGVA) threads the bilayer. Residues 207–292 (TVTVVSLPND…EMVEKAQKEV (86 aa)) form the KH domain. The 94-residue stretch at 333–426 (VLKHSIEVAH…VAAADAISAA (94 aa)) folds into the HD domain.

It belongs to the RNase Y family.

Its subcellular location is the cell membrane. Its function is as follows. Endoribonuclease that initiates mRNA decay. In Symbiobacterium thermophilum (strain DSM 24528 / JCM 14929 / IAM 14863 / T), this protein is Ribonuclease Y.